The chain runs to 1005 residues: Helicase-like transcription factor (1005 aa).

Arginine 27 is subject to Omega-N-methylarginine. Residues 38 to 287 (EFQDIIPPDD…FSEKDQPENV (250 aa)) mediate DNA binding. Residue lysine 112 forms a Glycyl lysine isopeptide (Lys-Gly) (interchain with G-Cter in SUMO2) linkage. Tyrosine 195 bears the Phosphotyrosine; by JAK2 mark. A Glycyl lysine isopeptide (Lys-Gly) (interchain with G-Cter in SUMO2) cross-link involves residue lysine 211. 294–301 (DDMGLGKT) serves as a coordination point for ATP. The segment covering 325–361 (KNQVKKECNSSESDKPGRKDTIKKTDGLSKEGSRYSE) has biased composition (basic and acidic residues). Positions 325–385 (KNQVKKECNS…SELSSSQPKR (61 aa)) are disordered. A compositionally biased stretch (polar residues) spans 373 to 382 (YSMSELSSSQ). 3 positions are modified to phosphoserine: serine 395, serine 396, and serine 398. The Helicase ATP-binding domain maps to 427–603 (GPSKIKEDTA…WSLLSFLKLK (177 aa)). The DEGH box signature appears at 554–557 (DEGH). Phosphothreonine is present on threonine 733. The RING-type zinc finger occupies 757–798 (CAICLDSLTVPVITHCAHVFCKPCICQCIQNEQPHAKCPLCR). Required for interaction with the RFBP isoform of ATP11B stretches follow at residues 767–772 (PVITHC) and 791–796 (HAKCPL). Residues 834 to 999 (ALMHALIDLR…EMKQAKINEI (166 aa)) form the Helicase C-terminal domain. The segment at 922–1005 (SRVFLMDPAW…INEIRTLIDL (84 aa)) is interaction with SP1 and SP3.

This sequence belongs to the SNF2/RAD54 helicase family. RAD16 subfamily. In terms of assembly, interacts with SP1 and SP3 independently of DNA; the interaction with these transcriptional factors may be required for basal transcription of target genes. Interacts (via the RING-finger) with isoform RFBP of ATP11B. Progesterone-dependent isoform 1 interacts with EGR1; the interaction requires prior binding to DNA and represses c-Rel via a DNA looping mechanism. Interacts with GATA4. Interacts with PCNA; the interaction promotes polyubiquitination of PCNA through association with the UBE2B-RAD18 and UBE2V2-UBE2N ubiquitin ligase complexes. Interacts with RAD18, SHPRH, UBE2V2 and UBE2N. In terms of processing, phosphorylated on serine, threonine, and tyrosine residues. Tyr-195 phosphorylation is catalyzed by JAK2 in response to prolactin treatment. It is required for DNA binding. As to expression, isoform 1 is expressed preferentially in bladder, cervix, diaphragm, duodenum, epididymis, heart, kidney, liver, lung, ovary (granulosa cells), prostate, spleen, testis (predominantly in the Sertoli cells of the seminiferous tubules) and vagina. Isoform 2 is expressed preferentially in lactating mammary gland and uterine endometrium.

The protein resides in the cytoplasm. It localises to the nucleus. Its subcellular location is the nucleolus. It is found in the nucleoplasm. The enzyme catalyses S-ubiquitinyl-[E2 ubiquitin-conjugating enzyme]-L-cysteine + [acceptor protein]-L-lysine = [E2 ubiquitin-conjugating enzyme]-L-cysteine + N(6)-ubiquitinyl-[acceptor protein]-L-lysine.. It functions in the pathway protein modification; protein ubiquitination. Functionally, has both helicase and E3 ubiquitin ligase activities. Possesses intrinsic ATP-dependent nucleosome-remodeling activity. This activity may be required for transcriptional activation or repression of specific target promoters. These may include the SERPINE1, to which this protein can bind directly. Mediates repression by c-Rel through a DNA-looping mechanism. Plays a role in error-free postreplication repair (PRR) of damaged DNA and maintains genomic stability through acting as a ubiquitin ligase for 'Lys-63'-linked polyubiquitination of chromatin-bound PCNA. Transcriptional regulator that mediates the ability of prolactin to augment progesterone-dependent transcription of the SCGB1A1/uteroglobin gene through a bipartite progesterone receptor half-site/overlapping Y-box combination (-38/-26) where progesterone activation is attenuated by nuclear factor Y binding. Regulation also involves two GC-rich sequences in the proximal promoter (positions -162/+90) and a RUSH/SMARCA3 site (positions -616/-611) in the 5'-untranslated region. The polypeptide is Helicase-like transcription factor (HLTF) (Oryctolagus cuniculus (Rabbit)).